A 306-amino-acid polypeptide reads, in one-letter code: Porphobilinogen deaminase (306 aa).

An S-(dipyrrolylmethanemethyl)cysteine modification is found at Cys241.

Belongs to the HMBS family. In terms of assembly, monomer. Dipyrromethane is required as a cofactor.

It carries out the reaction 4 porphobilinogen + H2O = hydroxymethylbilane + 4 NH4(+). The protein operates within porphyrin-containing compound metabolism; protoporphyrin-IX biosynthesis; coproporphyrinogen-III from 5-aminolevulinate: step 2/4. Its function is as follows. Tetrapolymerization of the monopyrrole PBG into the hydroxymethylbilane pre-uroporphyrinogen in several discrete steps. The protein is Porphobilinogen deaminase of Acidithiobacillus ferrooxidans (strain ATCC 23270 / DSM 14882 / CIP 104768 / NCIMB 8455) (Ferrobacillus ferrooxidans (strain ATCC 23270)).